The sequence spans 271 residues: Insulin-like growth factor-binding protein 5 (271 aa).

An N-terminal signal peptide occupies residues 1 to 19 (MVISVVLLLLAAYAVPAQG). Residues 22–102 (SFVHCEPCDE…LHGRGVCLNE (81 aa)) form the IGFBP N-terminal domain. 6 disulfide bridges follow: cysteine 26/cysteine 52, cysteine 29/cysteine 54, cysteine 37/cysteine 55, cysteine 44/cysteine 58, cysteine 66/cysteine 79, and cysteine 73/cysteine 99. The span at 109 to 121 (TKIERDSREHEEP) shows a compositional bias: basic and acidic residues. The disordered stretch occupies residues 109–129 (TKIERDSREHEEPTTSEMAEE). The residue at position 115 (serine 115) is a Phosphoserine. Residues 188 to 262 (QGPCRRHMEA…MEYVDGDFQC (75 aa)) enclose the Thyroglobulin type-1 domain. 3 disulfides stabilise this stretch: cysteine 191–cysteine 218, cysteine 229–cysteine 240, and cysteine 242–cysteine 262.

Interacts with IGF1; this interaction enhances the growth stimulatory effects of IGF1 on fibroblasts. Interacts with CAV1; this interaction allows trafficking of IGFBP5 from the plasma membrane to the nucleus. Interacts with NCL; this interaction is necessary for IGFBP5 localization to the nucleus. As to expression, most abundant in kidney, uterus and gastrocnemius muscle.

Its subcellular location is the secreted. The protein localises to the cytoplasm. It localises to the nucleus. Multifunctional protein that plays a critical role in regulating the availability of IGFs to their receptors and thereby regulates IGF-mediated cellular processes including proliferation, differentiation, and apoptosis in a cell-type specific manner. Increases the cell proliferation of osteoblasts, intestinal smooth muscle cells and neuroblastoma cells. Enhances adhesion and survival of epithelial cells but decreases adhesion of mesenchymal cells. Once secreted, acts as a major mediator of mTORC1-dependent feedback inhibition of IGF1 signaling. Also plays a role in the induction of extracellular matrix (ECM) production and deposition independently of its nuclear translocation and binding to IGFs. Acts itself as a growth factor that can act independently of IGFs to regulate bone formation. Acts as a ligand for the ROR1 receptor which triggers formation of ROR1/HER2 heterodimer to enhance CREB oncogenic signaling. This chain is Insulin-like growth factor-binding protein 5 (Igfbp5), found in Mus musculus (Mouse).